The following is a 396-amino-acid chain: Phosphoglycerate kinase (396 aa).

Residues 21 to 23 (DFN), Arg36, 59 to 62 (HLGR), Arg118, and Arg151 contribute to the substrate site. ATP contacts are provided by residues Lys201, Gly292, Glu323, and 349-352 (GGDS).

The protein belongs to the phosphoglycerate kinase family. As to quaternary structure, monomer.

It localises to the cytoplasm. The enzyme catalyses (2R)-3-phosphoglycerate + ATP = (2R)-3-phospho-glyceroyl phosphate + ADP. It participates in carbohydrate degradation; glycolysis; pyruvate from D-glyceraldehyde 3-phosphate: step 2/5. In Leptospira borgpetersenii serovar Hardjo-bovis (strain L550), this protein is Phosphoglycerate kinase.